The chain runs to 285 residues: Bifunctional protein FolD (285 aa).

NADP(+) contacts are provided by residues 166-168 (GRS), S191, and T232.

The protein belongs to the tetrahydrofolate dehydrogenase/cyclohydrolase family. As to quaternary structure, homodimer.

It catalyses the reaction (6R)-5,10-methylene-5,6,7,8-tetrahydrofolate + NADP(+) = (6R)-5,10-methenyltetrahydrofolate + NADPH. It carries out the reaction (6R)-5,10-methenyltetrahydrofolate + H2O = (6R)-10-formyltetrahydrofolate + H(+). Its pathway is one-carbon metabolism; tetrahydrofolate interconversion. Its function is as follows. Catalyzes the oxidation of 5,10-methylenetetrahydrofolate to 5,10-methenyltetrahydrofolate and then the hydrolysis of 5,10-methenyltetrahydrofolate to 10-formyltetrahydrofolate. The protein is Bifunctional protein FolD of Chloroflexus aurantiacus (strain ATCC 29366 / DSM 635 / J-10-fl).